The primary structure comprises 659 residues: WD repeat-containing protein 48 homolog (659 aa).

WD repeat units follow at residues 27–66 (RHRN…SQEP), 73–112 (HHND…CMST), 115–154 (THRD…ALTA), 166–205 (GSKD…KIAK), 208–247 (GHAE…CVQT), 250–289 (VHSE…NSVL), 292–331 (EERA…KLSF), and 337–376 (KGGA…KVED). A disordered region spans residues 592-613 (ASTGNSNSSQNNSQSDANSEGS). The segment covering 596-610 (NSNSSQNNSQSDANS) has biased composition (low complexity).

This sequence belongs to the WD repeat WDR48 family. As to quaternary structure, catalytic component of the Usp12-46 deubiquitylase complex consisting of Usp12-46, Wdr20 and Uaf1; regulatory subunit that, together wtih Wdr20, stabilizes Usp12-46. The Usp12-46 deubiquitylase complex associates with arr/arrow; the interaction leads to deubiquitination and stabilization of arr/arrow.

Regulatory component of the Usp12-46 deubiquitylase complex. activates deubiquitination by increasing the catalytic turnover without increasing the affinity of deubiquitinating enzymes for the substrate. The complex deubiquitylates the wg/wingless-signaling receptor arr/arrow, which stabilizes the receptor and increases its concentration at the cell surface; this enhances the sensitivity of cells to wg/wingless-signal stimulation. This increases the amplitude and spatial range of the signaling response to the wg/wingless morphogen gradient, facilitating the precise concentration-dependent regulation of its target genes. Together with Wdr20 and Usp12-46 required for wg/wingless-mediated signaling in the wing imaginal disc and for wg/wingless-dependent regulation of intestinal stem cell proliferation. The sequence is that of WD repeat-containing protein 48 homolog from Aedes aegypti (Yellowfever mosquito).